A 400-amino-acid polypeptide reads, in one-letter code: Tryptophan synthase beta chain (400 aa).

At lysine 90 the chain carries N6-(pyridoxal phosphate)lysine.

It belongs to the TrpB family. As to quaternary structure, tetramer of two alpha and two beta chains. Pyridoxal 5'-phosphate is required as a cofactor.

The catalysed reaction is (1S,2R)-1-C-(indol-3-yl)glycerol 3-phosphate + L-serine = D-glyceraldehyde 3-phosphate + L-tryptophan + H2O. It participates in amino-acid biosynthesis; L-tryptophan biosynthesis; L-tryptophan from chorismate: step 5/5. Functionally, the beta subunit is responsible for the synthesis of L-tryptophan from indole and L-serine. This is Tryptophan synthase beta chain (trpB) from Bacillus subtilis (strain 168).